A 360-amino-acid polypeptide reads, in one-letter code: DNA replication and repair protein RecF (360 aa).

30-37 (GHNGSGKT) contacts ATP.

It belongs to the RecF family.

The protein resides in the cytoplasm. Functionally, the RecF protein is involved in DNA metabolism; it is required for DNA replication and normal SOS inducibility. RecF binds preferentially to single-stranded, linear DNA. It also seems to bind ATP. The polypeptide is DNA replication and repair protein RecF (Actinobacillus pleuropneumoniae serotype 5b (strain L20)).